Reading from the N-terminus, the 384-residue chain is Inactive lipoate--protein ligase 2 (384 aa).

In terms of domain architecture, BPL/LPL catalytic spans 79 to 303; sequence NESKGNECIF…HIKHIINYKN (225 aa).

It is found in the mitochondrion. The protein resides in the plastid. Its subcellular location is the apicoplast. In the mitochondrion and together with LipL1, involved in the lipoylation of the E2 component of the branched chain alpha-ketoacid dehydrogenase complex BCKDH-E2/BCDH and the E2 component of the alpha -ketoglutarate dehydrogenase complex KDH. LipL1 is responsible for catalysing the activation of lipoate, forming lipoyl-AMP while LipL2 is required but is not capable of catalyzing this reaction. Although its role is unclear, it may catalyze the transfer of lipoyl groups from lipoyl-AMP to BCDH and KDH or act as an effector protein. The sequence is that of Inactive lipoate--protein ligase 2 from Plasmodium falciparum (isolate 3D7).